We begin with the raw amino-acid sequence, 92 residues long: Small ribosomal subunit protein uS19 (92 aa).

The interval 73 to 92 (EFSPTRSFRGHAGAKNKGRK) is disordered. The span at 80 to 92 (FRGHAGAKNKGRK) shows a compositional bias: basic residues.

The protein belongs to the universal ribosomal protein uS19 family.

In terms of biological role, protein S19 forms a complex with S13 that binds strongly to the 16S ribosomal RNA. This Christiangramia forsetii (strain DSM 17595 / CGMCC 1.15422 / KT0803) (Gramella forsetii) protein is Small ribosomal subunit protein uS19.